The primary structure comprises 153 residues: Regulatory protein RecX (153 aa).

This sequence belongs to the RecX family.

It is found in the cytoplasm. Modulates RecA activity. This chain is Regulatory protein RecX, found in Syntrophotalea carbinolica (strain DSM 2380 / NBRC 103641 / GraBd1) (Pelobacter carbinolicus).